Here is a 204-residue protein sequence, read N- to C-terminus: MFNSLFGNLLSLVMGYLLGSLPSGYLAAHWLAGIDLREKGSGSTGATNVLRQVGKGPALAVFLIDVGKGTTAVLVARALELDDGWQVAAGLAALAGHIWPVWLGWKGGKAVATGLGMLLGISWPVGLACFGIFLTVLSFSRIVSLSSIIAALSLPLLMILRFQGNSPPAYLAVAFAAMAMVVWRHRSNLQRLLAGTEPRLGQSS.

Helical transmembrane passes span 12–32 (LVMGYLLGSLPSGYLAAHWLA), 85–105 (WQVAAGLAALAGHIWPVWLGW), 117–137 (MLLGISWPVGLACFGIFLTVL), 142–162 (IVSLSSIIAALSLPLLMILRF), and 163–183 (QGNSPPAYLAVAFAAMAMVVW).

Belongs to the PlsY family. Probably interacts with PlsX.

It is found in the cell inner membrane. It catalyses the reaction an acyl phosphate + sn-glycerol 3-phosphate = a 1-acyl-sn-glycero-3-phosphate + phosphate. The protein operates within lipid metabolism; phospholipid metabolism. Its function is as follows. Catalyzes the transfer of an acyl group from acyl-phosphate (acyl-PO(4)) to glycerol-3-phosphate (G3P) to form lysophosphatidic acid (LPA). This enzyme utilizes acyl-phosphate as fatty acyl donor, but not acyl-CoA or acyl-ACP. This chain is Glycerol-3-phosphate acyltransferase, found in Prochlorococcus marinus (strain MIT 9313).